The following is a 426-amino-acid chain: Proline--tRNA ligase (426 aa).

Belongs to the class-II aminoacyl-tRNA synthetase family. ProS type 2 subfamily. In terms of assembly, homodimer.

The protein localises to the cytoplasm. It carries out the reaction tRNA(Pro) + L-proline + ATP = L-prolyl-tRNA(Pro) + AMP + diphosphate. Its function is as follows. Catalyzes the attachment of proline to tRNA(Pro) in a two-step reaction: proline is first activated by ATP to form Pro-AMP and then transferred to the acceptor end of tRNA(Pro). The chain is Proline--tRNA ligase from Anaplasma phagocytophilum (strain HZ).